We begin with the raw amino-acid sequence, 530 residues long: uncharacterized protein (530 aa).

The tract at residues M1–G33 is disordered. A compositionally biased stretch (basic and acidic residues) spans P24 to G33. 12 helical membrane-spanning segments follow: residues F83–V103, W124–L144, F147–M167, F181–W201, V211–G231, Y244–P264, V323–I343, T346–F366, I375–I395, V404–L424, T436–F456, and S471–F491.

Belongs to the major facilitator superfamily. Allantoate permease family.

Its subcellular location is the endoplasmic reticulum. It localises to the membrane. This is an uncharacterized protein from Schizosaccharomyces pombe (strain 972 / ATCC 24843) (Fission yeast).